Consider the following 611-residue polypeptide: Protein ral2 (611 aa).

Kelch repeat units follow at residues 43–91, 96–149, and 175–224; these read EAFV…HSGD, KLIF…EVNG, and YLII…VINK. Ser604 carries the phosphoserine modification.

In terms of biological role, essential for mating and for recognition of the mating pheromone, and for the determination of cell shape. Implicated in activation of the ras1 protein. This Schizosaccharomyces pombe (strain 972 / ATCC 24843) (Fission yeast) protein is Protein ral2 (ral2).